The sequence spans 153 residues: Ribonuclease HI (153 aa).

Residues methionine 1 to asparagine 141 enclose the RNase H type-1 domain. 4 residues coordinate Mg(2+): aspartate 9, glutamate 47, aspartate 69, and aspartate 133.

This sequence belongs to the RNase H family. As to quaternary structure, monomer. It depends on Mg(2+) as a cofactor.

The protein localises to the cytoplasm. It carries out the reaction Endonucleolytic cleavage to 5'-phosphomonoester.. Endonuclease that specifically degrades the RNA of RNA-DNA hybrids. This is Ribonuclease HI from Haemophilus ducreyi (strain 35000HP / ATCC 700724).